We begin with the raw amino-acid sequence, 711 residues long: MKSMNIAASSELVSRLSSHRRVVALGDTDFTDVAAVVITAADSRSGILALLKRTGFHLPVFLYSEHAVELPAGVTAVINGNEQQWLELESAACQYEENLLPPFYDTLTQYVEMGNSTFACPGHQHGAFFKKHPAGRHFYDFFGENVFRADMCNADVKLGDLLIHEGSAKDAQKFAAKVFHADKTYFVLNGTSAANKVVTNALLTRGDLVLFDRNNHKSNHHGALIQAGATPVYLEASRNPFGFIGGIDAHCFNEEYLRQQIRDVAPEKADLPRPYRLAIIQLGTYDGTVYNARQVIDTVGHLCDYILFDSAWVGYEQFIPMMADSSPLLLELNENDPGIFVTQSVHKQQAGFSQTSQIHKKDNHIRGQARFCPHKRLNNAFMLHASTSPFYPLFAALDVNAKIHEGESGRRLWAECVEIGIEARKAILARCKLFRPFIPPVVDGKLWQDYPTSVLASDRRFFSFEPGAKWHGFEGYAADQYFVDPCKLLLTTPGIDAETGEYSDFGVPATILAHYLRENGIVPEKCDLNSILFLLTPAESHEKLAQLVAMLAQFEQHIEDDSPLVEVLPSVYNKYPVRYRDYTLRQLCQEMHDLYVSFDVKDLQKAMFRQQSFPSVVMNPQDAHSAYIRGDVELVRIRDAEGRIAAEGALPYPPGVLCVVPGEVWGGAVQRYFLALEEGVNLLPGFSPELQGVYSETDADGVKRLYGYVLK.

Lysine 347 carries the post-translational modification N6-(pyridoxal phosphate)lysine.

The protein belongs to the Orn/Lys/Arg decarboxylase class-I family. Pyridoxal 5'-phosphate is required as a cofactor.

The enzyme catalyses L-ornithine + H(+) = putrescine + CO2. Its pathway is amine and polyamine biosynthesis; putrescine biosynthesis via L-ornithine pathway; putrescine from L-ornithine: step 1/1. This is Constitutive ornithine decarboxylase (speC) from Escherichia coli (strain K12).